The primary structure comprises 405 residues: Metallophosphoesterase 1 (405 aa).

A helical membrane pass occupies residues 31–51 (IFGSILLVFFFCEFLVYYLVI). Positions 78, 120, 158, 261, 315, and 317 each coordinate a divalent metal cation. A helical transmembrane segment spans residues 369–389 (IIYIYCTASVLLTGYVLACLW).

The protein belongs to the metallophosphoesterase superfamily. MPPE1 family. It depends on Mn(2+) as a cofactor.

The protein resides in the endoplasmic reticulum-Golgi intermediate compartment membrane. In terms of biological role, metallophosphoesterase that catalyzes the removal of a side-chain ethanolamine-phosphate (EtNP) from the second mannose of the GPI-anchor protein intermediate. Participates in the glycan remodeling steps of GPI-anchor maturation to allow an efficient transport of GPI-anchor proteins from the endoplasmic reticulum to the Golgi. The polypeptide is Metallophosphoesterase 1 (Xenopus laevis (African clawed frog)).